The sequence spans 419 residues: UDP-N-acetylglucosamine 1-carboxyvinyltransferase (419 aa).

22-23 (KN) contacts phosphoenolpyruvate. UDP-N-acetyl-alpha-D-glucosamine is bound at residue arginine 91. Cysteine 115 serves as the catalytic Proton donor. Cysteine 115 is subject to 2-(S-cysteinyl)pyruvic acid O-phosphothioketal. Residues 120–124 (RPVDL), 160–163 (KVSV), aspartate 305, and valine 327 each bind UDP-N-acetyl-alpha-D-glucosamine.

This sequence belongs to the EPSP synthase family. MurA subfamily.

The protein localises to the cytoplasm. It catalyses the reaction phosphoenolpyruvate + UDP-N-acetyl-alpha-D-glucosamine = UDP-N-acetyl-3-O-(1-carboxyvinyl)-alpha-D-glucosamine + phosphate. Its pathway is cell wall biogenesis; peptidoglycan biosynthesis. In terms of biological role, cell wall formation. Adds enolpyruvyl to UDP-N-acetylglucosamine. The sequence is that of UDP-N-acetylglucosamine 1-carboxyvinyltransferase from Escherichia coli (strain K12 / MC4100 / BW2952).